Here is a 256-residue protein sequence, read N- to C-terminus: 5'-nucleotidase SurE (256 aa).

Residues aspartate 8, aspartate 9, serine 40, and asparagine 92 each contribute to the a divalent metal cation site.

Belongs to the SurE nucleotidase family. The cofactor is a divalent metal cation.

The protein resides in the cytoplasm. The enzyme catalyses a ribonucleoside 5'-phosphate + H2O = a ribonucleoside + phosphate. Nucleotidase that shows phosphatase activity on nucleoside 5'-monophosphates. This Sinorhizobium fredii (strain NBRC 101917 / NGR234) protein is 5'-nucleotidase SurE.